The primary structure comprises 378 residues: Merozoite surface protein P41 (378 aa).

The N-terminal stretch at 1-20 (MKGVIFCLVVLLWRQAWVSS) is a signal peptide. In terms of domain architecture, 6-Cys 1 spans 21–133 (KSHKCDFTKE…LKINRFLKDD (113 aa)). Disulfide bonds link cysteine 25-cysteine 42, cysteine 56-cysteine 113, and cysteine 64-cysteine 111. N-linked (GlcNAc...) asparagine glycosylation is found at asparagine 77, asparagine 149, asparagine 182, and asparagine 205. One can recognise a 6-Cys 2 domain in the interval 241–375 (VIKGCDFGNN…GESEVVLNSF (135 aa)). Intrachain disulfides connect cysteine 245/cysteine 270, cysteine 284/cysteine 348, and cysteine 297/cysteine 346. A glycan (N-linked (GlcNAc...) asparagine) is linked at asparagine 351.

In terms of assembly, heterodimer; heterodimerizes with PF12. May form an antiparallel heterodimer with PF12. Post-translationally, processed into a soluble form.

The protein resides in the cell surface. It localises to the cell membrane. The sequence is that of Merozoite surface protein P41 (PF41) from Plasmodium falciparum (isolate 3D7).